The following is a 462-amino-acid chain: MTCEVKEKGRVGTINPIFTCQPAGAQFVSIGIKDCIGIVHGGQGCVMFVRLIFSQHYKESFELASSSLHEDGAVFGACGRVEEAVDVLLSRYPDVKVVPIITTCSTEIIGDDVDGVIKKLNEGLLKEKFPDREVHLIAMHTPSFVGSMISGYDVAVRDVVRHFAKREAPNDKINLLTGWVNPGDVKELKHLLGEMDIEANVLFEIESFDSPILPDGSAVSHGNTTIEDLIDTGNARATFALNRYEGTKAAEYLQKKFEIPAIIGPTPIGIRNTDIFLQNLKKATGKPIPQSLAHERGVAIDALADLTHMFLAEKRVAIYGAPDLVIGLAEFCLDLEMKPVLLLLGDDNSKYVDDPRIKALQENVDYGMEIVTNADFWELENRIKNEGLELDLILGHSKGRFISIDYNIPMLRVGFPTYDRAGLFRYPTVGYGGAIWLAEQMANTLFADMEHKKNKEWVLNVW.

[8Fe-7S] cluster is bound by residues Cys20, Cys45, Cys104, and Ser143.

It belongs to the NifD/NifK/NifE/NifN family. In terms of assembly, hexamer of two alpha, two beta, and two delta chains. The cofactor is [8Fe-7S] cluster.

It carries out the reaction N2 + 8 reduced [2Fe-2S]-[ferredoxin] + 16 ATP + 16 H2O = H2 + 8 oxidized [2Fe-2S]-[ferredoxin] + 2 NH4(+) + 16 ADP + 16 phosphate + 6 H(+). This iron-iron protein is part of the nitrogenase complex that catalyzes the key enzymatic reactions in nitrogen fixation. Other nitrogenase complexes utilize a molybdenum-iron protein or a vanadium-iron protein. This is Nitrogenase iron-iron protein beta chain (anfK) from Azotobacter vinelandii.